Here is a 1940-residue protein sequence, read N- to C-terminus: Myosin-13 (1940 aa).

Residues 33–82 (DSKKACFAMDDKEMYVKGMIQSRENDKVTVKTLDDRTLTLNSDQVFPMNP) enclose the Myosin N-terminal SH3-like domain. One can recognise a Myosin motor domain in the interval 86-782 (DKIEDMAMMT…LLGLLEEMRD (697 aa)). Lysine 130 bears the N6,N6,N6-trimethyllysine mark. 179–186 (GESGAGKT) serves as a coordination point for ATP. Actin-binding stretches follow at residues 659-681 (LNKL…IPNE) and 761-775 (RFGH…GLLG). The region spanning 785 to 814 (LVTLMTRTQAICRGYLMRVEFKKMMERRES) is the IQ domain. Residues 843–1940 (LLKSAEAERE…RDVGAQKMEE (1098 aa)) are a coiled coil. The disordered stretch occupies residues 1886–1940 (RQAEEAEEQANTQMSKCRRVQHELEEAEERADIAESQVNKLRAKSRDVGAQKMEE). Over residues 1929-1940 (KSRDVGAQKMEE) the composition is skewed to basic and acidic residues.

It belongs to the TRAFAC class myosin-kinesin ATPase superfamily. Myosin family. As to quaternary structure, muscle myosin is a hexameric protein that consists of 2 heavy chain subunits (MHC), 2 alkali light chain subunits (MLC) and 2 regulatory light chain subunits (MLC-2).

It localises to the cytoplasm. The protein localises to the myofibril. Its function is as follows. Fast twitching myosin mediating the high-velocity and low-tension contractions of specific striated muscles. This Canis lupus familiaris (Dog) protein is Myosin-13 (MYH13).